Reading from the N-terminus, the 747-residue chain is Transcription factor phm2 (747 aa).

Positions Cys21–Cys50 form a DNA-binding region, zn(2)-C6 fungal-type. Disordered regions lie at residues Gly112 to Ser150 and Thr414 to Arg436.

Its subcellular location is the nucleus. Functionally, transcription factor that regulates the expression of the gene cluster that mediates the biosynthesis of the trans-fused decalin-containing tetramic acid phomasetin. The polypeptide is Transcription factor phm2 (Pyrenochaetopsis sp).